Here is a 178-residue protein sequence, read N- to C-terminus: ATP synthase subunit delta (178 aa).

The protein belongs to the ATPase delta chain family. F-type ATPases have 2 components, F(1) - the catalytic core - and F(0) - the membrane proton channel. F(1) has five subunits: alpha(3), beta(3), gamma(1), delta(1), epsilon(1). F(0) has three main subunits: a(1), b(2) and c(10-14). The alpha and beta chains form an alternating ring which encloses part of the gamma chain. F(1) is attached to F(0) by a central stalk formed by the gamma and epsilon chains, while a peripheral stalk is formed by the delta and b chains.

It is found in the cell membrane. In terms of biological role, f(1)F(0) ATP synthase produces ATP from ADP in the presence of a proton or sodium gradient. F-type ATPases consist of two structural domains, F(1) containing the extramembraneous catalytic core and F(0) containing the membrane proton channel, linked together by a central stalk and a peripheral stalk. During catalysis, ATP synthesis in the catalytic domain of F(1) is coupled via a rotary mechanism of the central stalk subunits to proton translocation. Functionally, this protein is part of the stalk that links CF(0) to CF(1). It either transmits conformational changes from CF(0) to CF(1) or is implicated in proton conduction. This is ATP synthase subunit delta from Streptococcus pyogenes serotype M1.